We begin with the raw amino-acid sequence, 132 residues long: Cell division protein FtsL (132 aa).

The Cytoplasmic segment spans residues 1–50 (MAELKKMRHNHYDVPVMDEPVIASQIKKTNQKKESFQLPQKKLNKISVFE). The chain crosses the membrane as a helical span at residues 51 to 71 (KILCILLLCSIVGIVVITIQI). Residues 72 to 132 (RTTISETMNN…EIDGNLRKVK (61 aa)) lie on the Extracellular side of the membrane.

Belongs to the FtsL family.

The protein localises to the cell membrane. Functionally, essential cell division protein. This Melissococcus plutonius (strain ATCC 35311 / DSM 29964 / CIP 104052 / LMG 20360 / NCIMB 702443) protein is Cell division protein FtsL.